Reading from the N-terminus, the 345-residue chain is Phosphoribosylformylglycinamidine cyclo-ligase (345 aa).

This sequence belongs to the AIR synthase family.

The protein resides in the cytoplasm. The enzyme catalyses 2-formamido-N(1)-(5-O-phospho-beta-D-ribosyl)acetamidine + ATP = 5-amino-1-(5-phospho-beta-D-ribosyl)imidazole + ADP + phosphate + H(+). It participates in purine metabolism; IMP biosynthesis via de novo pathway; 5-amino-1-(5-phospho-D-ribosyl)imidazole from N(2)-formyl-N(1)-(5-phospho-D-ribosyl)glycinamide: step 2/2. The sequence is that of Phosphoribosylformylglycinamidine cyclo-ligase from Anaeromyxobacter dehalogenans (strain 2CP-C).